Reading from the N-terminus, the 440-residue chain is Glutamate--tRNA ligase 2 (440 aa).

The 'HIGH' region motif lies at 8–18 (PSPTGYLHVGN). A 'KMSKS' region motif is present at residues 239 to 243 (ALSKR). An ATP-binding site is contributed by lysine 242.

Belongs to the class-I aminoacyl-tRNA synthetase family. Glutamate--tRNA ligase type 1 subfamily. Monomer.

The protein localises to the cytoplasm. The enzyme catalyses tRNA(Glu) + L-glutamate + ATP = L-glutamyl-tRNA(Glu) + AMP + diphosphate. Functionally, catalyzes the attachment of glutamate to tRNA(Glu) in a two-step reaction: glutamate is first activated by ATP to form Glu-AMP and then transferred to the acceptor end of tRNA(Glu). The sequence is that of Glutamate--tRNA ligase 2 from Dinoroseobacter shibae (strain DSM 16493 / NCIMB 14021 / DFL 12).